Here is a 147-residue protein sequence, read N- to C-terminus: Lectin-like protein BA14k (147 aa).

An N-terminal signal peptide occupies residues 1–26 (MNSFRKTCAGALALIFGATSIVPTVA). The helical transmembrane segment at 80 to 100 (GWWYPLAAFGAGAIIGGAISQ) threads the bilayer.

It belongs to the BA14k family.

The protein resides in the cell membrane. Has immunoglobulin-binding and hemagglutination properties, and can bind to mannose. Essential for virulence. May be involved in LPS biosynthesis or polysaccharide transport. The polypeptide is Lectin-like protein BA14k (Brucella abortus (strain S19)).